We begin with the raw amino-acid sequence, 84 residues long: Acetylcholine receptor subunit alpha (84 aa).

Disulfide bonds link Cys-7–Cys-21 and Cys-71–Cys-72. A glycan (N-linked (GlcNAc...) asparagine) is linked at Asn-20.

The protein belongs to the ligand-gated ion channel (TC 1.A.9) family. Acetylcholine receptor (TC 1.A.9.1) subfamily. Alpha-1/CHRNA1 sub-subfamily. In terms of assembly, one of the alpha chains that assemble within the acetylcholine receptor, a pentamer of two alpha chains, a beta, a delta, and a gamma (in immature muscle) or epsilon (in mature muscle) chains. The muscle heteropentamer composed of alpha-1, beta-1, delta, epsilon subunits interacts with the alpha-conotoxin ImII.

It localises to the postsynaptic cell membrane. It is found in the cell membrane. The catalysed reaction is K(+)(in) = K(+)(out). It carries out the reaction Na(+)(in) = Na(+)(out). Upon acetylcholine binding, the AChR responds by an extensive change in conformation that affects all subunits and leads to opening of an ion-conducting channel across the plasma membrane. The chain is Acetylcholine receptor subunit alpha (CHRNA1) from Crocidura russula (Greater white-toothed shrew).